Reading from the N-terminus, the 981-residue chain is Calsyntenin-1 (981 aa).

Residues 1–28 (MLRRPAPALAPAARLLLAGLLCGGGVWA) form the signal peptide. Topologically, residues 29-859 (ARVNKHKPWL…PHPFAVVPST (831 aa)) are extracellular. Cadherin domains follow at residues 38–164 (LEPT…APVF) and 165–265 (KEKS…TPGW). Asn346, Asn366, and Asn515 each carry an N-linked (GlcNAc...) asparagine glycan. A helical membrane pass occupies residues 860-880 (ATVVIVVCVSFLVFMIILGVF). Topologically, residues 881–981 (RIRAAHRRTM…LEWDDSTLSY (101 aa)) are cytoplasmic. Residues 915-981 (METYEDQHSS…LEWDDSTLSY (67 aa)) are disordered. Acidic residues predominate over residues 925 to 960 (EEEEEEEEEEESEDGEEEDDITSAESESSEEEEGEQ). A compositionally biased stretch (polar residues) spans 962–981 (DPQNATRQQQLEWDDSTLSY).

This sequence belongs to the calsyntenin family. Directly interacts with APBA2. Forms a tripartite complex with APBA2 and APP. Interacts with KLC1. In terms of assembly, interacts with APBB1; this interaction stabilizes AlcICD metabolism. As to quaternary structure, interacts with PSEN1. In terms of processing, proteolytically processed under normal cellular conditions. A primary zeta-cleavage generates a large extracellular (soluble) N-terminal domain (sAlc) and a short C-terminal transmembrane fragment (CTF1). A secondary cleavage catalyzed by presenilin gamma-secretase within the transmembrane domain releases the beta-Alc-alpha chain in the extracellular milieu and produces an intracellular fragment (AlcICD). This processing is strongly suppressed in the tripartite complex formed with APBA2 and APP, which seems to prevent the association with PSEN1. In terms of tissue distribution, expressed in the brain and, a lower level, in the heart, skeletal muscle, kidney and placenta. Accumulates in dystrophic neurites around the amyloid core of Alzheimer disease senile plaques (at protein level).

It localises to the postsynaptic cell membrane. Its subcellular location is the endoplasmic reticulum membrane. The protein localises to the golgi apparatus membrane. The protein resides in the cell projection. It is found in the neuron projection. It localises to the nucleus. Its function is as follows. Postsynaptic adhesion molecule that binds to presynaptic neurexins to mediate both excitatory and inhibitory synapse formation. Promotes synapse development by acting as a cell adhesion molecule at the postsynaptic membrane, which associates with neurexin-alpha at the presynaptic membrane. Also functions as a cargo in axonal anterograde transport by acting as a molecular adapter that promotes KLC1 association with vesicles. Complex formation with APBA2 and APP, stabilizes APP metabolism and enhances APBA2-mediated suppression of beta-APP40 secretion, due to the retardation of intracellular APP maturation. Functionally, as intracellular fragment AlcICD, suppresses APBB1-dependent transactivation stimulated by APP C-terminal intracellular fragment (AICD), most probably by competing with AICD for APBB1-binding. In terms of biological role, in complex with APBA2 and C99, a C-terminal APP fragment, abolishes C99 interaction with PSEN1 and thus APP C99 cleavage by gamma-secretase, most probably through stabilization of the direct interaction between APBA2 and APP. The protein is Calsyntenin-1 of Homo sapiens (Human).